A 536-amino-acid polypeptide reads, in one-letter code: MEEPPQEALAEPLKHESPAAPSSAGHTKGQEEDDQKNQAERKADNHTAHRIADQTALRVPSQAESSIFSQATNGVAEQNGHSTPGQAGRRASNPADVSDLRADDQVNQTPSEQTKGKASSQANNVQHEQSDGQVSGLTEERTAEQTERRLPTQAERRTSGQIDGRLAMPSDQRGSRQTDHRMAGQSERRASEQMDRRMSGEAERRTSEQITHRLSKLSERRPSVQIDSGSSVPSDQSPSVQIDSGSSVPSDQRPSVQIDRRMSGKVRRRSSEKTDYRLAGLADPGTSEQTDLRLYGLVDHKTSVKTHHQVYGQATELAEHQAIDQAHSNADQPPVDNAHYTESDQTDHLADRQANHKDQLSYYETRGQSEDRIFPQLGNSKEDKEADYRVQPCKFEDSQVDLNSKPSVEMETQNATTIPPYNPVDARFTSNFQAKDQALFPRLPSISSKLNYTSSQEKTQAIVTKSDEFSEIDQGKGYHIRNQTYRRFPSIVYEDPYQVSLQYMEKHHILQIFQQITENLVYEKPEDPLNFMLCQV.

Low complexity predominate over residues 1 to 11 (MEEPPQEALAE). Disordered regions lie at residues 1 to 287 (MEEP…PGTS) and 328 to 348 (SNAD…QTDH). The segment covering 35–52 (QKNQAERKADNHTAHRIA) has biased composition (basic and acidic residues). Polar residues-rich tracts occupy residues 62 to 85 (QAES…STPG) and 105 to 136 (QVNQ…QVSG). Composition is skewed to basic and acidic residues over residues 138-158 (TEER…ERRT) and 173-222 (RGSR…ERRP). Residues 226–242 (IDSGSSVPSDQSPSVQI) show a composition bias toward low complexity. Residues 243-255 (DSGSSVPSDQRPS) are compositionally biased toward polar residues. Residues 339–348 (HYTESDQTDH) are compositionally biased toward basic and acidic residues.

As to expression, testis-specific.

Its subcellular location is the nucleus. The protein localises to the cell projection. It localises to the cilium. It is found in the flagellum. This chain is Testis-specific expressed protein 55, found in Homo sapiens (Human).